The following is a 140-amino-acid chain: Large ribosomal subunit protein uL14 (140 aa).

Position 17 is a phosphoserine (Ser-17). Phosphotyrosine is present on Tyr-38.

It belongs to the universal ribosomal protein uL14 family. In terms of assembly, component of the large ribosomal subunit.

The protein resides in the cytoplasm. Functionally, component of the large ribosomal subunit. The ribosome is a large ribonucleoprotein complex responsible for the synthesis of proteins in the cell. The chain is Large ribosomal subunit protein uL14 (RPL23) from Pongo abelii (Sumatran orangutan).